Consider the following 95-residue polypeptide: MSVDQATVRRIAHLARIKVSDEDVPHLQDELNAILRFVEELAAVDVEGVEAMTSVMPMPMKKRQDIVTEGEIPDVILANAPEREDHFFKVPKVVE.

Belongs to the GatC family. In terms of assembly, heterotrimer of A, B and C subunits.

It carries out the reaction L-glutamyl-tRNA(Gln) + L-glutamine + ATP + H2O = L-glutaminyl-tRNA(Gln) + L-glutamate + ADP + phosphate + H(+). It catalyses the reaction L-aspartyl-tRNA(Asn) + L-glutamine + ATP + H2O = L-asparaginyl-tRNA(Asn) + L-glutamate + ADP + phosphate + 2 H(+). Functionally, allows the formation of correctly charged Asn-tRNA(Asn) or Gln-tRNA(Gln) through the transamidation of misacylated Asp-tRNA(Asn) or Glu-tRNA(Gln) in organisms which lack either or both of asparaginyl-tRNA or glutaminyl-tRNA synthetases. The reaction takes place in the presence of glutamine and ATP through an activated phospho-Asp-tRNA(Asn) or phospho-Glu-tRNA(Gln). In Methylocella silvestris (strain DSM 15510 / CIP 108128 / LMG 27833 / NCIMB 13906 / BL2), this protein is Aspartyl/glutamyl-tRNA(Asn/Gln) amidotransferase subunit C.